Here is a 602-residue protein sequence, read N- to C-terminus: Sodium-independent sulfate anion transporter (602 aa).

At 1–47 (MSPPMSPMKPPKGFAPMSCCWSTETMQKWLPFLGWLPDYTWYALKMD) the chain is on the extracellular side. Residues 48 to 68 (FIAGISVGLTVIPQALAYAEV) form a helical membrane-spanning segment. Ala-69 is a topological domain (cytoplasmic). A helical transmembrane segment spans residues 70 to 90 (GLPPQYGLYSAFMGCFVYFFL). The Extracellular portion of the chain corresponds to 91 to 115 (GTSRDVTLGPTAIMSLLVSFYTFHE). Residues 116–136 (PAYAVLLAFLTGCIQLGMGFL) traverse the membrane as a helical segment. Over 137 to 143 (RLGLLLD) the chain is Cytoplasmic. The helical transmembrane segment at 144–164 (FISCPVIKGFTSAAAIIIGFG) threads the bilayer. Topologically, residues 165–193 (QIKNLLGLQHIPRQFFLQVYYTFHNIGET) are extracellular. A helical membrane pass occupies residues 194 to 214 (RVGDAVLGLVCMVLLLVLKLM). Residues 215–246 (RDHVPPVHPEMPTGVRLSHGLVWTATTARNAL) lie on the Cytoplasmic side of the membrane. Residues 247–267 (VVSFAALVAYSFQVTGYQPFV) form a helical membrane-spanning segment. Topologically, residues 268 to 300 (LTGKTPEGLPDAHIPPFSVTTANGTISFTEMVQ) are extracellular. Residues 301–321 (GMGAGLVVVPLMGLLESIAVA) form a helical membrane-spanning segment. At 322-337 (KSFASQNNYRINSNQE) the chain is on the cytoplasmic side. The chain crosses the membrane as a helical span at residues 338–358 (LLALGFTNILGSLFSSYPVTG). Residues 359 to 370 (SFGRTAVNAQSG) are Extracellular-facing. Residues 371–391 (VCTPAGGLMTGALVLLSLDYL) form a helical membrane-spanning segment. The Cytoplasmic segment spans residues 392-394 (TSL). The chain crosses the membrane as a helical span at residues 395 to 415 (FYYIPKSALAAVIIMAVVPLF). Over 416-438 (DTKIVKTLWRVKRLDLLPLCVTF) the chain is Extracellular. Residues 439–459 (LLCFWEVQYGILAGTLVSVLI) traverse the membrane as a helical segment. The Cytoplasmic portion of the chain corresponds to 460–602 (LLHSVARPKI…PEHKIALLKA (143 aa)). The region spanning 466–580 (RPKIQVSEGP…EAEKYLKQEP (115 aa)) is the STAS domain.

The protein belongs to the SLC26A/SulP transporter (TC 2.A.53) family.

The protein localises to the cell membrane. Its subcellular location is the lysosome membrane. It is found in the apical cell membrane. It localises to the basolateral cell membrane. It catalyses the reaction hydrogencarbonate(in) + chloride(out) = hydrogencarbonate(out) + chloride(in). The catalysed reaction is sulfate(in) + H(+)(in) = sulfate(out) + H(+)(out). It carries out the reaction oxalate(in) + chloride(out) = oxalate(out) + chloride(in). Functionally, sodium-independent anion exchanger mediating bicarbonate, chloride, sulfate and oxalate transport. Exhibits sodium-independent sulfate anion transporter activity that may cooperate with SLC26A2 to mediate DIDS-sensitive sulfate uptake into high endothelial venules endothelial cells (HEVEC). In the kidney, mediates chloride-bicarbonate exchange, facilitating V-ATPase-mediated acid secretion. May function as a chloride channel, playing an important role in moderating chloride homeostasis and neuronal activity in the cerebellum. The chain is Sodium-independent sulfate anion transporter from Bos taurus (Bovine).